Reading from the N-terminus, the 82-residue chain is Protein costars (82 aa).

Belongs to the costars family.

Modulates actin dynamics and cell motility. The chain is Protein costars (cosA) from Dictyostelium discoideum (Social amoeba).